A 76-amino-acid polypeptide reads, in one-letter code: ATP synthase subunit 9, mitochondrial (76 aa).

2 helical membrane passes run methionine 14–isoleucine 34 and isoleucine 52–leucine 72.

It belongs to the ATPase C chain family. As to quaternary structure, F-type ATPases have 2 components, CF(1) - the catalytic core - and CF(0) - the membrane proton channel. CF(1) has five subunits: alpha(3), beta(3), gamma(1), delta(1), epsilon(1). CF(0) has three main subunits: a, b and c.

It localises to the mitochondrion membrane. Its function is as follows. Mitochondrial membrane ATP synthase (F(1)F(0) ATP synthase or Complex V) produces ATP from ADP in the presence of a proton gradient across the membrane which is generated by electron transport complexes of the respiratory chain. F-type ATPases consist of two structural domains, F(1) - containing the extramembraneous catalytic core and F(0) - containing the membrane proton channel, linked together by a central stalk and a peripheral stalk. During catalysis, ATP synthesis in the catalytic domain of F(1) is coupled via a rotary mechanism of the central stalk subunits to proton translocation. Part of the complex F(0) domain. A homomeric c-ring of probably 10 subunits is part of the complex rotary element. This is ATP synthase subunit 9, mitochondrial (ATP9) from Debaryomyces hansenii (strain ATCC 36239 / CBS 767 / BCRC 21394 / JCM 1990 / NBRC 0083 / IGC 2968) (Yeast).